Here is a 347-residue protein sequence, read N- to C-terminus: Lipoyl synthase (347 aa).

[4Fe-4S] cluster is bound by residues Cys-77, Cys-82, Cys-88, Cys-103, Cys-107, Cys-110, and Ser-317. The 218-residue stretch at 89–306 (FADGTATFMI…MDYGKKIGFF (218 aa)) folds into the Radical SAM core domain.

It belongs to the radical SAM superfamily. Lipoyl synthase family. [4Fe-4S] cluster is required as a cofactor.

It localises to the cytoplasm. The enzyme catalyses [[Fe-S] cluster scaffold protein carrying a second [4Fe-4S](2+) cluster] + N(6)-octanoyl-L-lysyl-[protein] + 2 oxidized [2Fe-2S]-[ferredoxin] + 2 S-adenosyl-L-methionine + 4 H(+) = [[Fe-S] cluster scaffold protein] + N(6)-[(R)-dihydrolipoyl]-L-lysyl-[protein] + 4 Fe(3+) + 2 hydrogen sulfide + 2 5'-deoxyadenosine + 2 L-methionine + 2 reduced [2Fe-2S]-[ferredoxin]. Its pathway is protein modification; protein lipoylation via endogenous pathway; protein N(6)-(lipoyl)lysine from octanoyl-[acyl-carrier-protein]: step 2/2. In terms of biological role, catalyzes the radical-mediated insertion of two sulfur atoms into the C-6 and C-8 positions of the octanoyl moiety bound to the lipoyl domains of lipoate-dependent enzymes, thereby converting the octanoylated domains into lipoylated derivatives. The polypeptide is Lipoyl synthase (Psychrobacter cryohalolentis (strain ATCC BAA-1226 / DSM 17306 / VKM B-2378 / K5)).